The primary structure comprises 174 residues: Gamma-crystallin F (174 aa).

2 consecutive Beta/gamma crystallin 'Greek key' domains span residues 2 to 40 and 41 to 83; these read GKIT…RVDS and GCWM…RLIP. The connecting peptide stretch occupies residues 84–87; the sequence is HTGS. 2 Beta/gamma crystallin 'Greek key' domains span residues 88-128 and 129-171; these read HRLR…NVLE and GWWV…RRAV.

It belongs to the beta/gamma-crystallin family.

In terms of biological role, crystallins are the dominant structural components of the vertebrate eye lens. The sequence is that of Gamma-crystallin F (CRYGF) from Bos taurus (Bovine).